A 776-amino-acid chain; its full sequence is Probable E3 ubiquitin-protein ligase HECTD2 (776 aa).

The disordered stretch occupies residues 1-46; it reads MSEAVRVPSPATPLVVAAPAPEERKGKESEREKLPPIVSAGAGATA. Residues 7–20 show a composition bias toward low complexity; sequence VPSPATPLVVAAPA. Residue S9 is modified to Phosphoserine. A compositionally biased stretch (basic and acidic residues) spans 21–34; that stretch reads PEERKGKESEREKL. The 340-residue stretch at 437–776 folds into the HECT domain; the sequence is KRADLKKKLK…ISNSEGFGLE (340 aa). C744 functions as the Glycyl thioester intermediate in the catalytic mechanism.

The catalysed reaction is S-ubiquitinyl-[E2 ubiquitin-conjugating enzyme]-L-cysteine + [acceptor protein]-L-lysine = [E2 ubiquitin-conjugating enzyme]-L-cysteine + N(6)-ubiquitinyl-[acceptor protein]-L-lysine.. It participates in protein modification; protein ubiquitination. In terms of biological role, E3 ubiquitin-protein ligase which accepts ubiquitin from an E2 ubiquitin-conjugating enzyme in the form of a thioester and then directly transfers the ubiquitin to targeted substrates. (Microbial infection) Catalyzes ubiquitination of Botulinum neurotoxin A light chain (LC) of C.botulinum neurotoxin type A (BoNT/A). In Homo sapiens (Human), this protein is Probable E3 ubiquitin-protein ligase HECTD2.